The following is a 62-amino-acid chain: Short neurotoxin C (62 aa).

Polar residues predominate over residues 1–16 (RRCFNQQSSQPQTNKS). Positions 1–22 (RRCFNQQSSQPQTNKSCPPGEN) are disordered. 4 cysteine pairs are disulfide-bonded: C3/C24, C17/C41, C43/C54, and C55/C60.

It belongs to the three-finger toxin family. Short-chain subfamily. Type I alpha-neurotoxin sub-subfamily. As to expression, expressed by the venom gland.

The protein resides in the secreted. Binds to muscle nicotinic acetylcholine receptor (nAChR) and inhibit acetylcholine from binding to the receptor, thereby impairing neuromuscular transmission. The protein is Short neurotoxin C of Laticauda laticaudata (Blue-ringed sea krait).